A 194-amino-acid chain; its full sequence is Putative manganese efflux pump MntP (194 aa).

A run of 6 helical transmembrane segments spans residues 3-23 (PFSI…AAIG), 37-57 (LRAG…GWVL), 69-89 (DHWI…IAGL), 110-132 (LGLA…SLAF), 147-167 (CTFS…NLIG), and 172-192 (ILGG…HLGA).

It belongs to the MntP (TC 9.B.29) family.

It is found in the cell inner membrane. Functionally, probably functions as a manganese efflux pump. The protein is Putative manganese efflux pump MntP of Xanthomonas oryzae pv. oryzae (strain MAFF 311018).